Here is an 887-residue protein sequence, read N- to C-terminus: Translation initiation factor IF-2 (887 aa).

The segment at 1–259 (MSDEQDQGET…KVGDDRRRGA (259 aa)) is disordered. The span at 62–94 (GRPSAPSRASGGAAAPRGLTAAEQAARQRAVVE) shows a compositional bias: low complexity. Basic and acidic residues-rich tracts occupy residues 95-111 (QQRE…EQEK) and 119-158 (EEAR…RRAA). Over residues 159-210 (EASQATAAPPAPAAAASPRAAMPAPTAAPARPGAAPARRTAPVPPATSASET) the composition is skewed to low complexity. Over residues 250–259 (KVGDDRRRGA) the composition is skewed to basic and acidic residues. The tr-type G domain occupies 386-556 (VRPPVVTIMG…LLQAELLDLK (171 aa)). Residues 395–402 (GHVDHGKT) are G1. 395–402 (GHVDHGKT) serves as a coordination point for GTP. Residues 420–424 (GITQH) form a G2 region. A G3 region spans residues 442-445 (DTPG). GTP contacts are provided by residues 442-446 (DTPGH) and 496-499 (NKID). Residues 496 to 499 (NKID) are G4. Residues 532 to 534 (SAL) form a G5 region.

Belongs to the TRAFAC class translation factor GTPase superfamily. Classic translation factor GTPase family. IF-2 subfamily.

It is found in the cytoplasm. In terms of biological role, one of the essential components for the initiation of protein synthesis. Protects formylmethionyl-tRNA from spontaneous hydrolysis and promotes its binding to the 30S ribosomal subunits. Also involved in the hydrolysis of GTP during the formation of the 70S ribosomal complex. The polypeptide is Translation initiation factor IF-2 (Acidiphilium cryptum (strain JF-5)).